We begin with the raw amino-acid sequence, 210 residues long: Isochorismatase domain-containing protein 2 (210 aa).

Position 7 is a phosphoserine (Ser-7).

This sequence belongs to the isochorismatase family. Interacts with CDKN2A.

Its subcellular location is the cytoplasm. It localises to the nucleus. This chain is Isochorismatase domain-containing protein 2 (Isoc2), found in Rattus norvegicus (Rat).